A 447-amino-acid polypeptide reads, in one-letter code: Adenylosuccinate synthetase (447 aa).

Residues G12–K18 and G40–T42 contribute to the GTP site. The Proton acceptor role is filled by D13. Mg(2+) contacts are provided by D13 and G40. Residues D13 to K16, N38 to H41, T128, R142, Q223, T238, and R302 contribute to the IMP site. H41 functions as the Proton donor in the catalytic mechanism. T298–R304 is a substrate binding site. GTP-binding positions include R304, K330–D332, and S412–G414.

This sequence belongs to the adenylosuccinate synthetase family. Homodimer. It depends on Mg(2+) as a cofactor.

It is found in the cytoplasm. The enzyme catalyses IMP + L-aspartate + GTP = N(6)-(1,2-dicarboxyethyl)-AMP + GDP + phosphate + 2 H(+). The protein operates within purine metabolism; AMP biosynthesis via de novo pathway; AMP from IMP: step 1/2. Functionally, plays an important role in the de novo pathway of purine nucleotide biosynthesis. Catalyzes the first committed step in the biosynthesis of AMP from IMP. The polypeptide is Adenylosuccinate synthetase (Nostoc punctiforme (strain ATCC 29133 / PCC 73102)).